The following is a 1163-amino-acid chain: Hamartin (1163 aa).

Lysine 30 is covalently cross-linked (Glycyl lysine isopeptide (Lys-Gly) (interchain with G-Cter in ubiquitin)). Over residues 295 to 316 (SSYVDTQNSYGGATSTPSSTSR) the composition is skewed to polar residues. Disordered regions lie at residues 295 to 337 (SSYV…STRP) and 353 to 594 (CGMT…QRGV). Residues 321–337 (STPGQLPQSLSSLSTRP) are compositionally biased toward low complexity. Pro residues predominate over residues 393 to 402 (TSPPPAPPCP). The mediates interaction with WDR45B stretch occupies residues 403-787 (QDDCAHGPAS…QIRQLQHDRE (385 aa)). Basic and acidic residues predominate over residues 474-487 (EKDKEEAAISKELS). Phosphoserine occurs at positions 487, 505, 511, 521, 595, and 598. Over residues 512-530 (LSGSQRKTHSAASGTQGFS) the composition is skewed to polar residues. 2 coiled-coil regions span residues 721-919 (RKVI…LAKK) and 970-994 (EKDGRLQKLEEDRAEAAEAAEERLD). Over residues 1008–1020 (NEEAAGHNGETRT) the composition is skewed to basic and acidic residues. The interval 1008–1163 (NEEAAGHNGE…DYNETHHEHS (156 aa)) is disordered. The segment covering 1029-1046 (SCGGRVTGGSSSSSSELS) has biased composition (low complexity). Polar residues predominate over residues 1066–1083 (EPSSSIPTTVGSLPSSKS). Over residues 1088-1099 (KTRELFRNKSES) the composition is skewed to basic and acidic residues. The residue at position 1097 (serine 1097) is a Phosphoserine. Residues 1131 to 1146 (PPSLDAPHPSSPSSDS) show a composition bias toward low complexity. The span at 1154–1163 (DYNETHHEHS) shows a compositional bias: basic and acidic residues.

In terms of assembly, component of the TSC-TBC complex (also named Rhebulator complex), composed of 2 molecules of TSC1, 2 molecules of TSC2 and 1 molecule of TBC1D7. Probably forms a complex composed of chaperones HSP90 and HSP70, co-chaperones STIP1/HOP, CDC37, PPP5C, PTGES3/p23, TSC1 and client protein TSC2. Forms a complex composed of chaperones HSP90 and HSP70, co-chaperones CDC37, PPP5C, TSC1 and client protein TSC2, CDK4, AKT, RAF1 and NR3C1; this complex does not contain co-chaperones STIP1/HOP and PTGES3/p23. Forms a complex containing HSP90AA1, TSC1 and TSC2; TSC1 is required to recruit TCS2 to the complex. Interacts (via C-terminus) with the closed form of HSP90AA1 (via the middle domain and TPR repeat-binding motif). Interacts with DOCK7. Interacts with FBXW5. Interacts with WDR45B. Interacts with RPAP3 and URI1. In terms of processing, phosphorylation at Ser-505 does not affect interaction with TSC2. 'Lys-63'-linked ubiquitinated at Lys-30 by PELI1; the ubiquitination promotes TSC1/TSC2 complex stability. As to expression, highly expressed in brain, spleen and kidney, followed by liver and heart.

The protein resides in the lysosome membrane. Its subcellular location is the cytoplasm. It localises to the cytosol. Non-catalytic component of the TSC-TBC complex, a multiprotein complex that acts as a negative regulator of the canonical mTORC1 complex, an evolutionarily conserved central nutrient sensor that stimulates anabolic reactions and macromolecule biosynthesis to promote cellular biomass generation and growth. The TSC-TBC complex acts as a GTPase-activating protein (GAP) for the small GTPase RHEB, a direct activator of the protein kinase activity of mTORC1. In absence of nutrients, the TSC-TBC complex inhibits mTORC1, thereby preventing phosphorylation of ribosomal protein S6 kinase (RPS6KB1 and RPS6KB2) and EIF4EBP1 (4E-BP1) by the mTORC1 signaling. The TSC-TBC complex is inactivated in response to nutrients, relieving inhibition of mTORC1. Within the TSC-TBC complex, TSC1 stabilizes TSC2 and prevents TSC2 self-aggregation. Involved in microtubule-mediated protein transport via its ability to regulate mTORC1 signaling. Also acts as a co-chaperone for HSP90AA1 facilitating HSP90AA1 chaperoning of protein clients such as kinases, TSC2 and glucocorticoid receptor NR3C1. Increases ATP binding to HSP90AA1 and inhibits HSP90AA1 ATPase activity. Competes with the activating co-chaperone AHSA1 for binding to HSP90AA1, thereby providing a reciprocal regulatory mechanism for chaperoning of client proteins. Recruits TSC2 to HSP90AA1 and stabilizes TSC2 by preventing the interaction between TSC2 and ubiquitin ligase HERC1. In Rattus norvegicus (Rat), this protein is Hamartin.